Here is a 462-residue protein sequence, read N- to C-terminus: Argininosuccinate lyase (462 aa).

It belongs to the lyase 1 family. Argininosuccinate lyase subfamily.

The protein resides in the cytoplasm. The catalysed reaction is 2-(N(omega)-L-arginino)succinate = fumarate + L-arginine. It functions in the pathway amino-acid biosynthesis; L-arginine biosynthesis; L-arginine from L-ornithine and carbamoyl phosphate: step 3/3. The protein is Argininosuccinate lyase of Prochlorococcus marinus (strain SARG / CCMP1375 / SS120).